A 453-amino-acid chain; its full sequence is Chromosomal replication initiator protein DnaA (453 aa).

Residues 1-71 (MSEKEIWEKV…QAILFDVVGY (71 aa)) form a domain I, interacts with DnaA modulators region. Residues 71–114 (YEVKPHFITTEELANYSNNETATPKEATKPSTETTEDNHVLGRE) are domain II. Positions 115–331 (QFNAHNTFDT…GALTRLLAYS (217 aa)) are domain III, AAA+ region. ATP is bound by residues Gly159, Gly161, Lys162, and Thr163. Residues 332–453 (QLLGKPITTE…ENLEKEIRNV (122 aa)) are domain IV, binds dsDNA.

This sequence belongs to the DnaA family. Oligomerizes as a right-handed, spiral filament on DNA at oriC.

It is found in the cytoplasm. Functionally, plays an essential role in the initiation and regulation of chromosomal replication. ATP-DnaA binds to the origin of replication (oriC) to initiate formation of the DNA replication initiation complex once per cell cycle. Binds the DnaA box (a 9 base pair repeat at the origin) and separates the double-stranded (ds)DNA. Forms a right-handed helical filament on oriC DNA; dsDNA binds to the exterior of the filament while single-stranded (ss)DNA is stabiized in the filament's interior. The ATP-DnaA-oriC complex binds and stabilizes one strand of the AT-rich DNA unwinding element (DUE), permitting loading of DNA polymerase. After initiation quickly degrades to an ADP-DnaA complex that is not apt for DNA replication. Binds acidic phospholipids. This chain is Chromosomal replication initiator protein DnaA, found in Staphylococcus aureus (strain MRSA252).